The chain runs to 294 residues: Nucleotide-binding protein Smlt1108 (294 aa).

16–23 lines the ATP pocket; the sequence is GLSGSGKS. 69-72 contacts GTP; the sequence is DVRG.

Belongs to the RapZ-like family.

Its function is as follows. Displays ATPase and GTPase activities. The chain is Nucleotide-binding protein Smlt1108 from Stenotrophomonas maltophilia (strain K279a).